Consider the following 291-residue polypeptide: Neugrin (291 aa).

An N-terminal signal peptide occupies residues 1-15 (MAVTLSLLLGGRVCA). Disordered stretches follow at residues 26–48 (GVAGPGPIGREPDPDSDWEPEER) and 155–270 (GSGN…DNFS). Ser41 bears the Phosphoserine mark. 2 N-linked (GlcNAc...) asparagine glycosylation sites follow: Asn158 and Asn186. Residues 236 to 246 (KYSSDSESPRG) are compositionally biased toward polar residues. Asn268 carries N-linked (GlcNAc...) asparagine glycosylation.

It belongs to the neugrin family. Forms a regulatory protein-RNA complex, consisting of RCC1L, NGRN, RPUSD3, RPUSD4, TRUB2, FASTKD2 and 16S mt-rRNA. Interacts with 16S mt-rRNA; this interaction is direct. In terms of tissue distribution, expressed at high levels in heart, brain and skeletal muscle. In brain, mainly expressed in neurons rather than glial cells.

The protein resides in the nucleus. It is found in the secreted. It localises to the mitochondrion membrane. Plays an essential role in mitochondrial ribosome biogenesis. As a component of a functional protein-RNA module, consisting of RCC1L, NGRN, RPUSD3, RPUSD4, TRUB2, FASTKD2 and 16S mitochondrial ribosomal RNA (16S mt-rRNA), controls 16S mt-rRNA abundance and is required for intra-mitochondrial translation of core subunits of the oxidative phosphorylation system. The polypeptide is Neugrin (Homo sapiens (Human)).